The following is a 591-amino-acid chain: V-type ATP synthase alpha chain (591 aa).

Position 233 to 240 (233 to 240) interacts with ATP; that stretch reads GPFGAGKT.

The protein belongs to the ATPase alpha/beta chains family.

The catalysed reaction is ATP + H2O + 4 H(+)(in) = ADP + phosphate + 5 H(+)(out). In terms of biological role, produces ATP from ADP in the presence of a proton gradient across the membrane. The V-type alpha chain is a catalytic subunit. This chain is V-type ATP synthase alpha chain, found in Streptococcus pyogenes serotype M49 (strain NZ131).